The following is a 308-amino-acid chain: Homoserine kinase (308 aa).

94–104 (PLARGLGSSAT) serves as a coordination point for ATP.

Belongs to the GHMP kinase family. Homoserine kinase subfamily.

It is found in the cytoplasm. The enzyme catalyses L-homoserine + ATP = O-phospho-L-homoserine + ADP + H(+). It participates in amino-acid biosynthesis; L-threonine biosynthesis; L-threonine from L-aspartate: step 4/5. Catalyzes the ATP-dependent phosphorylation of L-homoserine to L-homoserine phosphate. This Crocosphaera subtropica (strain ATCC 51142 / BH68) (Cyanothece sp. (strain ATCC 51142)) protein is Homoserine kinase.